A 446-amino-acid polypeptide reads, in one-letter code: Amino-acid acetyltransferase (446 aa).

The N-acetyltransferase domain occupies 299-431; the sequence is EQVRDAEIDD…SHLPMKKQKL (133 aa).

Belongs to the acetyltransferase family. ArgA subfamily.

The protein resides in the cytoplasm. The catalysed reaction is L-glutamate + acetyl-CoA = N-acetyl-L-glutamate + CoA + H(+). It functions in the pathway amino-acid biosynthesis; L-arginine biosynthesis; N(2)-acetyl-L-ornithine from L-glutamate: step 1/4. The sequence is that of Amino-acid acetyltransferase from Aliivibrio fischeri (strain MJ11) (Vibrio fischeri).